The sequence spans 258 residues: Regulatory protein RecX (258 aa).

Belongs to the RecX family.

It is found in the cytoplasm. Its function is as follows. Modulates RecA activity. The protein is Regulatory protein RecX of Streptococcus pneumoniae (strain JJA).